Reading from the N-terminus, the 142-residue chain is Multiprotein-bridging factor 1b (142 aa).

Residues 49-75 (NAGSNKAASSGTSLNTKKLDDDTENLS) are disordered. Positions 50–64 (AGSNKAASSGTSLNT) are enriched in polar residues. Positions 65–75 (KKLDDDTENLS) are enriched in basic and acidic residues. One can recognise an HTH cro/C1-type domain in the interval 87 to 141 (IMQARGEKKLTQSQLAHLINEKPQVIQEYESGKAIPNQQILSKLERALGAKLRGK). The H-T-H motif DNA-binding region spans 98-117 (QSQLAHLINEKPQVIQEYES).

It belongs to the MBF1 family. Expressed in leaves, roots, stems, petioles and shoots. Higher expression in flowers and siliques. Detected in leaf veins through development.

It is found in the nucleus. Its subcellular location is the nucleolus. Its function is as follows. Transcriptional coactivator that stimulates transcriptional activity by bridging regulatory proteins and TBP, thereby recruiting TBP to promoters occupied by DNA-binding regulators. This is Multiprotein-bridging factor 1b (MBF1B) from Arabidopsis thaliana (Mouse-ear cress).